Reading from the N-terminus, the 71-residue chain is MPRGSAERSLSFLVSIAFFGLAPTIPLLAIALWHVSWFDGHGDEQMGADSDDRAHAFQSDAAHRSDLIARM.

A helical transmembrane segment spans residues 12 to 32; the sequence is FLVSIAFFGLAPTIPLLAIAL.

The protein localises to the membrane. This is an uncharacterized protein from Sinorhizobium fredii (strain NBRC 101917 / NGR234).